Reading from the N-terminus, the 258-residue chain is Thiazole synthase 2 (258 aa).

The active-site Schiff-base intermediate with DXP is the lysine 97. Residues glycine 158, 184–185, and 206–207 each bind 1-deoxy-D-xylulose 5-phosphate; these read AG and NT.

This sequence belongs to the ThiG family. Homotetramer. Forms heterodimers with either ThiH or ThiS.

It localises to the cytoplasm. The enzyme catalyses [ThiS sulfur-carrier protein]-C-terminal-Gly-aminoethanethioate + 2-iminoacetate + 1-deoxy-D-xylulose 5-phosphate = [ThiS sulfur-carrier protein]-C-terminal Gly-Gly + 2-[(2R,5Z)-2-carboxy-4-methylthiazol-5(2H)-ylidene]ethyl phosphate + 2 H2O + H(+). The protein operates within cofactor biosynthesis; thiamine diphosphate biosynthesis. Functionally, catalyzes the rearrangement of 1-deoxy-D-xylulose 5-phosphate (DXP) to produce the thiazole phosphate moiety of thiamine. Sulfur is provided by the thiocarboxylate moiety of the carrier protein ThiS. In vitro, sulfur can be provided by H(2)S. The polypeptide is Thiazole synthase 2 (Syntrophotalea carbinolica (strain DSM 2380 / NBRC 103641 / GraBd1) (Pelobacter carbinolicus)).